Here is a 474-residue protein sequence, read N- to C-terminus: Glutamate--tRNA ligase (474 aa).

The short motif at 9–19 (PSPTGYLHVGG) is the 'HIGH' region element. The 'KMSKS' region signature appears at 240 to 244 (KLSKR). Lys-243 is a binding site for ATP.

It belongs to the class-I aminoacyl-tRNA synthetase family. Glutamate--tRNA ligase type 1 subfamily. As to quaternary structure, monomer.

It localises to the cytoplasm. The enzyme catalyses tRNA(Glu) + L-glutamate + ATP = L-glutamyl-tRNA(Glu) + AMP + diphosphate. Catalyzes the attachment of glutamate to tRNA(Glu) in a two-step reaction: glutamate is first activated by ATP to form Glu-AMP and then transferred to the acceptor end of tRNA(Glu). This Aliivibrio salmonicida (strain LFI1238) (Vibrio salmonicida (strain LFI1238)) protein is Glutamate--tRNA ligase.